Here is a 637-residue protein sequence, read N- to C-terminus: Biosynthetic arginine decarboxylase (637 aa).

Lys101 bears the N6-(pyridoxal phosphate)lysine mark. 286 to 296 serves as a coordination point for substrate; the sequence is VDIGGGLGVDY.

This sequence belongs to the Orn/Lys/Arg decarboxylase class-II family. SpeA subfamily. Mg(2+) serves as cofactor. Pyridoxal 5'-phosphate is required as a cofactor.

The catalysed reaction is L-arginine + H(+) = agmatine + CO2. Its pathway is amine and polyamine biosynthesis; agmatine biosynthesis; agmatine from L-arginine: step 1/1. Catalyzes the biosynthesis of agmatine from arginine. The protein is Biosynthetic arginine decarboxylase of Marinobacter nauticus (strain ATCC 700491 / DSM 11845 / VT8) (Marinobacter aquaeolei).